A 124-amino-acid polypeptide reads, in one-letter code: Large ribosomal subunit protein bL36m (124 aa).

The protein belongs to the bacterial ribosomal protein bL36 family. Component of the mitochondrial large ribosomal subunit (mt-LSU). Mature N.crassa 74S mitochondrial ribosomes consist of a small (37S) and a large (54S) subunit. The 37S small subunit contains a 16S ribosomal RNA (16S mt-rRNA) and 32 different proteins. The 54S large subunit contains a 23S rRNA (23S mt-rRNA) and 42 different proteins. bL36m has a zinc binding site.

The protein resides in the mitochondrion. Functionally, component of the mitochondrial ribosome (mitoribosome), a dedicated translation machinery responsible for the synthesis of mitochondrial genome-encoded proteins, including at least some of the essential transmembrane subunits of the mitochondrial respiratory chain. The mitoribosomes are attached to the mitochondrial inner membrane and translation products are cotranslationally integrated into the membrane. The sequence is that of Large ribosomal subunit protein bL36m (rtc6) from Neurospora crassa (strain ATCC 24698 / 74-OR23-1A / CBS 708.71 / DSM 1257 / FGSC 987).